Here is a 152-residue protein sequence, read N- to C-terminus: Deoxyuridine 5'-triphosphate nucleotidohydrolase (152 aa).

Substrate contacts are provided by residues arginine 71–glycine 73, asparagine 84, leucine 88–aspartate 90, and methionine 98.

The protein belongs to the dUTPase family. It depends on Mg(2+) as a cofactor.

It carries out the reaction dUTP + H2O = dUMP + diphosphate + H(+). It functions in the pathway pyrimidine metabolism; dUMP biosynthesis; dUMP from dCTP (dUTP route): step 2/2. Its function is as follows. This enzyme is involved in nucleotide metabolism: it produces dUMP, the immediate precursor of thymidine nucleotides and it decreases the intracellular concentration of dUTP so that uracil cannot be incorporated into DNA. This is Deoxyuridine 5'-triphosphate nucleotidohydrolase from Erwinia tasmaniensis (strain DSM 17950 / CFBP 7177 / CIP 109463 / NCPPB 4357 / Et1/99).